Consider the following 396-residue polypeptide: Methionine import ATP-binding protein MetN 2 (396 aa).

The region spanning 41–280 (VSFELVGKVF…PRHGATRALL (240 aa)) is the ABC transporter domain. 77 to 84 (GRSGAGKS) contributes to the ATP binding site.

It belongs to the ABC transporter superfamily. Methionine importer (TC 3.A.1.24) family. The complex is composed of two ATP-binding proteins (MetN), two transmembrane proteins (MetI) and a solute-binding protein (MetQ).

The protein localises to the cell inner membrane. The catalysed reaction is L-methionine(out) + ATP + H2O = L-methionine(in) + ADP + phosphate + H(+). It carries out the reaction D-methionine(out) + ATP + H2O = D-methionine(in) + ADP + phosphate + H(+). Its function is as follows. Part of the ABC transporter complex MetNIQ involved in methionine import. Responsible for energy coupling to the transport system. This is Methionine import ATP-binding protein MetN 2 from Burkholderia pseudomallei (strain 1710b).